Reading from the N-terminus, the 2135-residue chain is Protein SUBSTANDARD STARCH GRAIN 4, chloroplastic (2135 aa).

Composition is skewed to low complexity over residues 1-10 (MSHCLRASPF) and 72-84 (QHQP…RQQQ). A chloroplast-targeting transit peptide spans 1–42 (MSHCLRASPFLSPPPPLLHPSRRRRHRQGGCIHTSPGTRPLV). Disordered regions lie at residues 1 to 44 (MSHC…LVAR) and 58 to 89 (SDSS…PPPP). At 43–104 (ARARFDPPPL…ASLAPLWREG (62 aa)) the chain is on the stromal side. The chain crosses the membrane as a helical span at residues 105 to 125 (LFLVRCSVFAAALSVAAALSW). The Chloroplast intermembrane portion of the chain corresponds to 126–2135 (YAQLRARSFV…LFEYSATSQG (2010 aa)). The segment covering 361-370 (RRRYRRKAHS) has biased composition (basic residues). Disordered regions lie at residues 361-382 (RRRY…SSQQ), 401-492 (SGNP…QVSE), and 1843-1869 (FLGS…SFKP). Polar residues-rich tracts occupy residues 373 to 382 (ISDTDNSSQQ), 454 to 490 (NFAS…NEQV), and 1846 to 1856 (SLSTSPDGQQS). Positions 1857–1866 (ETERTPEHGS) are enriched in basic and acidic residues.

This sequence belongs to the TamB family. As to quaternary structure, part of the TIC complex, which can interact with components of the TOC complex to form a larger import complex. In terms of tissue distribution, highly expressed in third leaf and developing seeds. Expressed in anthers, pistils, flag leaves and young panicles.

The protein resides in the plastid. The protein localises to the chloroplast inner membrane. Its subcellular location is the chloroplast intermembrane space. It localises to the chloroplast. It is found in the amyloplast. Part of the inner chloroplast membrane translocon complex (TIC) which associates with the outer chloroplast membrane translocon complex (TOC) and forms a supercomplex involved in protein precursor import into the chloroplast stroma. Required for the regulation of starch granule size in amyloplasts. The chain is Protein SUBSTANDARD STARCH GRAIN 4, chloroplastic from Oryza sativa subsp. japonica (Rice).